Reading from the N-terminus, the 269-residue chain is Nus factor SuhB (269 aa).

Position 85–88 (85–88 (LDGK)) interacts with substrate.

It belongs to the inositol monophosphatase superfamily. In terms of assembly, homodimer. The rRNA transcription and antitermination complex (rrnTAC) consists of RNA polymerase (RNAP), NusA, NusB, NusE (rpsJ), NusG, SubB, ribosomal protein S4, DNA and precursor rRNA; S4 is more flexible than other subunits. Mg(2+) is required as a cofactor.

The protein resides in the cytoplasm. It catalyses the reaction a myo-inositol phosphate + H2O = myo-inositol + phosphate. In terms of biological role, part of the processive rRNA transcription and antitermination complex (rrnTAC). The complex forms an RNA-chaperone ring around the RNA exit tunnel of RNA polymerase (RNAP). It supports rapid transcription and antitermination of rRNA operons, cotranscriptional rRNA folding, and annealing of distal rRNA regions to allow correct ribosome biogenesis. This subunit may play a central role in organizing the structure. This is Nus factor SuhB (suhB) from Buchnera aphidicola subsp. Schizaphis graminum (strain Sg).